Consider the following 1325-residue polypeptide: MNAENTFSILNTNEPNAGGSQVTESEIEEEDIEFLSFAALKIGATSSLSNSSLGLPEYSNLFAINNLKSLFVAGVPNYLIIGSTLDLQKSLIDADENVDANVLKDSASIRHVSLPDAKFSMVSFSSNGEFVIAYDFVSFELSVYETDALLKNSATSIYKAVFPDLVQVLPNPEINNLVILRNLKLEVFLLSLSKFQVESPLAKDATCAAWSRRGKQCVIGFNNGTMSQYTPAGEIKLRIPRPPSLENYFVECISWIENREFVVFYSPLTSLSNESDEPPHESECFVISVGMNGHFNFGKAGDPTPPFGAVNRRDHHYIASLHAWKPDLRSLVVVANTASADLGVLALSMEKNQWSILNIVDETKRASLPYSNKKDSDSSPTALVMDFTATDRISKPLDPTEAPADCSPLPIVWVFNDEFQLVAYRIFYADAISKSIDYPEMNVIKDKNKDSTVRASNNENIPTPDKQASPFVKNLSSTSSPFSQSSAFGNFKFGQATSFDKGLSTDASSGAKSNTPVFGQPSTFGQAPVFGQPSAFGQAPVFGQPSAFGQSSFSFGTSNMNQKLDFGTFKSPLSGAATGEAKTNLEKAVTSASGKASFTGFAPSQSTTSGLNFDSIPKDNEAASIFGSSQVSTKNTSGFQFSNNTLLADNVDEDIESDHDTKIEELANSDVEPSTEQNIGGDVSWGASTFQSKPQPSFSFGLTLDDKSNTPGKNFSIFGKTAETQVEQKKPENNVLTKPFSFAPSDKSMFAANIPSAGEGLDQQKTSKALPSTGITKLSENDNEKAEESNETKGFNTTIAKQNDKSSKSEGKASVANMSALNKSTNNETSDSKPSLKSPLFNFSADAPTFTFNKPSETPPFSFNKPLVEKESKQDVSDTSDRSPFSFKAFGIDSKKSPTPEPTEMAESNISEESEGWKLIEQPNVESEIEDQDEESSDLNGKRRSTPPKIHEVGVNKMLDVVPKEKRDLNSFFPKQPLVVQSTDKNKKEPQESLEDEILSAEGFSEVEAANKISRFEPFSSPKLKLATSDNAPEKYVFEESESSDLEEGPVPLRNLESLADLPEAESNEKLPMVNTFERLYLQFKNELDLVWQNINIIAEYIEGQTSTPSAVSEQATMAMLSQNTEELEDLLDTVTSFSAFCSDYSKQIDYLEACLVRINAKRIQVTRLLKALTNPAFEKQMELRQLGPEALRRQKELRLKMEKVLKSLSTLEQQAVDARMSDTRRFKKPTLGSIEVAYSRIATLLGQRLKQLYKLEKDIKRMATKKKMITKKSMSSDMMTQFRALGISQSSTKQVSAHYLREFERQDAFRNGVFKRLTSLKKAD.

Disordered stretches follow at residues 1-20, 453-474, 758-951, and 973-994; these read MNAE…AGGS, VRAS…FVKN, GEGL…PKIH, and FPKQ…QESL. Residues 763-778 show a composition bias toward polar residues; sequence QQKTSKALPSTGITKL. Positions 779-791 are enriched in basic and acidic residues; it reads SENDNEKAEESNE. Residues 792–801 show a composition bias toward polar residues; the sequence is TKGFNTTIAK. Basic and acidic residues predominate over residues 802–811; that stretch reads QNDKSSKSEG. Composition is skewed to polar residues over residues 816–835 and 850–861; these read ANMS…SKPS and FTFNKPSETPPF. Residues 867 to 881 are compositionally biased toward basic and acidic residues; the sequence is LVEKESKQDVSDTSD. Thr899 is modified (phosphothreonine). Residues 927–937 are compositionally biased toward acidic residues; sequence SEIEDQDEESS. Position 946 is a phosphothreonine (Thr946). Phosphoserine is present on residues Ser1041, Ser1043, and Ser1044.

Its subcellular location is the cytoplasm. The protein localises to the nucleus. Functionally, functions as a component of the nuclear pore complex (NPC). NPC components, collectively referred to as nucleoporins (NUPs), can play the role of both NPC structural components and of docking or interaction partners for transiently associated nuclear transport factors. Active directional transport is assured by both, a Phe-Gly (FG) repeat affinity gradient for these transport factors across the NPC and a transport cofactor concentration gradient across the nuclear envelope. This Schizosaccharomyces pombe (strain 972 / ATCC 24843) (Fission yeast) protein is Nucleoporin nup146 (nup146).